A 919-amino-acid polypeptide reads, in one-letter code: Tight junction protein ZO-3 (919 aa).

In terms of domain architecture, PDZ 1 spans 11-93; the sequence is TATLSKDPRR…MANITVKRPR (83 aa). Positions 92 to 173 are disordered; sequence PRRIHLPATK…SPGGGSEANG (82 aa). Ser-112 carries the post-translational modification Phosphoserine. Over residues 117–131 the composition is skewed to basic and acidic residues; it reads GPQRVEEVDQGRGYD. Ser-136 bears the Phosphoserine mark. Residues 147-163 are compositionally biased toward basic residues; that stretch reads RRPRPGRRGRAGSHGRR. Residues Ser-164, Ser-169, Ser-203, and Ser-319 each carry the phosphoserine modification. The region spanning 195-272 is the PDZ 2 domain; that stretch reads SVLVKRRDSE…KLSLLVLRDR (78 aa). The segment at 279 to 377 is disordered; the sequence is IPPAVSDSDS…SSQSMEDRGY (99 aa). The residue at position 325 (Thr-325) is a Phosphothreonine. Phosphoserine is present on Ser-327. A compositionally biased stretch (basic and acidic residues) spans 332-360; the sequence is PRLRRESSVDSRTISEPDEQRSELPRESS. Ser-371 carries the phosphoserine modification. In terms of domain architecture, PDZ 3 spans 380–446; it reads DTRVVRFLKG…LTREEAVQFL (67 aa). In terms of domain architecture, SH3 spans 475–549; the sequence is GDSFYIRTHF…PNQSRAEQLA (75 aa). Positions 580–761 constitute a Guanylate kinase-like domain; it reads LRRGAKKTTQ…WYQELKAIIR (182 aa). Ser-591 is subject to Phosphoserine. Over residues 791 to 801 the composition is skewed to low complexity; it reads ADSSADLSCDS. 2 disordered regions span residues 791–886 and 899–919; these read ADSS…DSMR and RVHD…ATDL. The segment covering 812–828 has biased composition (gly residues); sequence EGGAYTDGEGYTDGEGG. A phosphoserine mark is found at Ser-856, Ser-905, and Ser-906.

Belongs to the MAGUK family. As to quaternary structure, interacts with occludin OCLN, claudins and TPJ1. Interacts with PATJ. Interacts with UBN1. Interacts with FASLG. Interacts with CCND1. In terms of processing, phosphorylated.

The protein resides in the cell membrane. It is found in the cell junction. The protein localises to the tight junction. It localises to the nucleus. Its function is as follows. TJP1, TJP2, and TJP3 are closely related scaffolding proteins that link tight junction (TJ) transmembrane proteins such as claudins, junctional adhesion molecules, and occludin to the actin cytoskeleton. The tight junction acts to limit movement of substances through the paracellular space and as a boundary between the compositionally distinct apical and basolateral plasma membrane domains of epithelial and endothelial cells. Binds and recruits PATJ to tight junctions where it connects and stabilizes apical and lateral components of tight junctions. Promotes cell-cycle progression through the sequestration of cyclin D1 (CCND1) at tight junctions during mitosis which prevents CCND1 degradation during M-phase and enables S-phase transition. With TJP1 and TJP2, participates in the junctional retention and stability of the transcription factor DBPA, but is not involved in its shuttling to the nucleus. Contrary to TJP2, TJP3 is dispensable for individual viability, embryonic development, epithelial differentiation, and the establishment of TJs, at least in the laboratory environment. This chain is Tight junction protein ZO-3 (TJP3), found in Homo sapiens (Human).